Reading from the N-terminus, the 692-residue chain is Elongation factor G (692 aa).

The 275-residue stretch at glutamate 8 to leucine 282 folds into the tr-type G domain. GTP contacts are provided by residues alanine 17–threonine 24, aspartate 81–histidine 85, and asparagine 135–aspartate 138.

The protein belongs to the TRAFAC class translation factor GTPase superfamily. Classic translation factor GTPase family. EF-G/EF-2 subfamily.

The protein localises to the cytoplasm. Its function is as follows. Catalyzes the GTP-dependent ribosomal translocation step during translation elongation. During this step, the ribosome changes from the pre-translocational (PRE) to the post-translocational (POST) state as the newly formed A-site-bound peptidyl-tRNA and P-site-bound deacylated tRNA move to the P and E sites, respectively. Catalyzes the coordinated movement of the two tRNA molecules, the mRNA and conformational changes in the ribosome. The sequence is that of Elongation factor G from Bacillus anthracis (strain CDC 684 / NRRL 3495).